A 415-amino-acid polypeptide reads, in one-letter code: U-box domain-containing protein 29 (415 aa).

Residues 11–85 enclose the U-box domain; the sequence is TVPSFFKCPI…NIWSDSIGRR (75 aa). 2 ARM repeats span residues 221-263 and 265-307; these read KSKL…TISK and KRVR…TLSS.

Binds to SD129 and SD25.

It catalyses the reaction S-ubiquitinyl-[E2 ubiquitin-conjugating enzyme]-L-cysteine + [acceptor protein]-L-lysine = [E2 ubiquitin-conjugating enzyme]-L-cysteine + N(6)-ubiquitinyl-[acceptor protein]-L-lysine.. The protein operates within protein modification; protein ubiquitination. In terms of biological role, functions as an E3 ubiquitin ligase. This is U-box domain-containing protein 29 (PUB29) from Arabidopsis thaliana (Mouse-ear cress).